The following is a 459-amino-acid chain: Bifunctional protein GlmU (459 aa).

Residues 1-229 (MTNYAIILAA…FDESLGVNDR (229 aa)) are pyrophosphorylase. UDP-N-acetyl-alpha-D-glucosamine contacts are provided by residues 8 to 11 (LAAG), Lys-22, Gln-72, and 77 to 78 (GT). A Mg(2+)-binding site is contributed by Asp-102. UDP-N-acetyl-alpha-D-glucosamine-binding residues include Gly-139, Glu-154, Asn-169, and Asn-227. A Mg(2+)-binding site is contributed by Asn-227. The linker stretch occupies residues 230-250 (VALATAESVMRRRINQQHMVN). Residues 251–459 (GVSFVNPHAT…KRLPHHPQNK (209 aa)) are N-acetyltransferase. 2 residues coordinate UDP-N-acetyl-alpha-D-glucosamine: Arg-332 and Lys-350. His-362 serves as the catalytic Proton acceptor. 2 residues coordinate UDP-N-acetyl-alpha-D-glucosamine: Tyr-365 and Asn-376. Acetyl-CoA-binding positions include Ala-379, 385 to 386 (NY), Ser-404, Ala-422, and Arg-439.

This sequence in the N-terminal section; belongs to the N-acetylglucosamine-1-phosphate uridyltransferase family. The protein in the C-terminal section; belongs to the transferase hexapeptide repeat family. As to quaternary structure, homotrimer. Requires Mg(2+) as cofactor.

The protein resides in the cytoplasm. It catalyses the reaction alpha-D-glucosamine 1-phosphate + acetyl-CoA = N-acetyl-alpha-D-glucosamine 1-phosphate + CoA + H(+). The catalysed reaction is N-acetyl-alpha-D-glucosamine 1-phosphate + UTP + H(+) = UDP-N-acetyl-alpha-D-glucosamine + diphosphate. Its pathway is nucleotide-sugar biosynthesis; UDP-N-acetyl-alpha-D-glucosamine biosynthesis; N-acetyl-alpha-D-glucosamine 1-phosphate from alpha-D-glucosamine 6-phosphate (route II): step 2/2. It functions in the pathway nucleotide-sugar biosynthesis; UDP-N-acetyl-alpha-D-glucosamine biosynthesis; UDP-N-acetyl-alpha-D-glucosamine from N-acetyl-alpha-D-glucosamine 1-phosphate: step 1/1. It participates in bacterial outer membrane biogenesis; LPS lipid A biosynthesis. Functionally, catalyzes the last two sequential reactions in the de novo biosynthetic pathway for UDP-N-acetylglucosamine (UDP-GlcNAc). The C-terminal domain catalyzes the transfer of acetyl group from acetyl coenzyme A to glucosamine-1-phosphate (GlcN-1-P) to produce N-acetylglucosamine-1-phosphate (GlcNAc-1-P), which is converted into UDP-GlcNAc by the transfer of uridine 5-monophosphate (from uridine 5-triphosphate), a reaction catalyzed by the N-terminal domain. The sequence is that of Bifunctional protein GlmU from Streptococcus sanguinis (strain SK36).